The primary structure comprises 123 residues: Large ribosomal subunit protein uL18 (123 aa).

It belongs to the universal ribosomal protein uL18 family. In terms of assembly, part of the 50S ribosomal subunit; part of the 5S rRNA/L5/L18/L25 subcomplex. Contacts the 5S and 23S rRNAs.

In terms of biological role, this is one of the proteins that bind and probably mediate the attachment of the 5S RNA into the large ribosomal subunit, where it forms part of the central protuberance. This is Large ribosomal subunit protein uL18 from Chlamydia caviae (strain ATCC VR-813 / DSM 19441 / 03DC25 / GPIC) (Chlamydophila caviae).